The primary structure comprises 460 residues: Proline--tRNA ligase (460 aa).

It belongs to the class-II aminoacyl-tRNA synthetase family. ProS type 3 subfamily. Homodimer.

It is found in the cytoplasm. The enzyme catalyses tRNA(Pro) + L-proline + ATP = L-prolyl-tRNA(Pro) + AMP + diphosphate. In terms of biological role, catalyzes the attachment of proline to tRNA(Pro) in a two-step reaction: proline is first activated by ATP to form Pro-AMP and then transferred to the acceptor end of tRNA(Pro). The sequence is that of Proline--tRNA ligase from Methanococcus maripaludis (strain C5 / ATCC BAA-1333).